Here is a 307-residue protein sequence, read N- to C-terminus: Elongation factor Ts (307 aa).

Residues 82–85 (TDFV) are involved in Mg(2+) ion dislocation from EF-Tu.

Belongs to the EF-Ts family.

It is found in the cytoplasm. Functionally, associates with the EF-Tu.GDP complex and induces the exchange of GDP to GTP. It remains bound to the aminoacyl-tRNA.EF-Tu.GTP complex up to the GTP hydrolysis stage on the ribosome. In Nautilia profundicola (strain ATCC BAA-1463 / DSM 18972 / AmH), this protein is Elongation factor Ts.